Reading from the N-terminus, the 393-residue chain is 5-amino-6-(D-ribitylamino)uracil--L-tyrosine 4-hydroxyphenyl transferase (393 aa).

One can recognise a Radical SAM core domain in the interval 67–322 (VTYVINRNIN…GQWIVNHQPS (256 aa)). The [4Fe-4S] cluster site is built by Cys81, Cys85, and Cys88.

This sequence belongs to the radical SAM superfamily. CofH family. Consists of two subunits, CofG and CofH. [4Fe-4S] cluster serves as cofactor.

It carries out the reaction 5-amino-6-(D-ribitylamino)uracil + L-tyrosine + S-adenosyl-L-methionine = 5-amino-5-(4-hydroxybenzyl)-6-(D-ribitylimino)-5,6-dihydrouracil + 2-iminoacetate + 5'-deoxyadenosine + L-methionine + H(+). The protein operates within cofactor biosynthesis; coenzyme F0 biosynthesis. In terms of biological role, catalyzes the radical-mediated synthesis of 5-amino-5-(4-hydroxybenzyl)-6-(D-ribitylimino)-5,6-dihydrouracil from 5-amino-6-(D-ribitylamino)uracil and L-tyrosine. This chain is 5-amino-6-(D-ribitylamino)uracil--L-tyrosine 4-hydroxyphenyl transferase, found in Thermosynechococcus vestitus (strain NIES-2133 / IAM M-273 / BP-1).